The sequence spans 134 residues: Crustacean hyperglycemic hormones isoform B (134 aa).

The first 24 residues, methionine 1–glycine 24, serve as a signal peptide directing secretion. Pyrrolidone carboxylic acid is present on glutamine 61. The residue at position 63 (phenylalanine 63) is a D-phenylalanine; in form CHH-B-II. 3 cysteine pairs are disulfide-bonded: cysteine 67–cysteine 103, cysteine 83–cysteine 99, and cysteine 86–cysteine 112. Residue valine 132 is modified to Valine amide.

Belongs to the arthropod CHH/MIH/GIH/VIH hormone family. Post-translationally, stereoinversion of L-Phe (form CHH-B-I) to D-Phe (form CHH-B-II). As to expression, produced by the medulla terminalis X-organ in the eyestalks and transported to the sinus gland where they are stored and released. Present also in the ventral nervous system.

It localises to the secreted. In terms of biological role, hormone found in the sinus gland of isopods and decapods which controls the blood sugar level. Has a secretagogue action over the amylase released from the midgut gland. May act as a stress hormone and may be involved in the control of molting and reproduction. In Homarus americanus (American lobster), this protein is Crustacean hyperglycemic hormones isoform B.